A 474-amino-acid chain; its full sequence is Solute carrier family 49 member A3 (474 aa).

Residues 1 to 20 (MEGESAETEPLIQSSSAADR) are disordered. The next 12 membrane-spanning stretches (helical) occupy residues 38 to 58 (WFIL…WLTF), 69 to 89 (LCVS…AAVV), 105 to 126 (CSLI…CGVL), 134 to 154 (VFAV…LVIF), 175 to 195 (LASM…PLIV), 201 to 221 (LFLL…LATL), 258 to 278 (WILL…STLL), 290 to 310 (GFAG…AFLL), 326 to 346 (ICMC…QLPA), 349 to 369 (VLLV…YPVG), 388 to 408 (LIFT…QALA), and 428 to 448 (VPVL…VVFF).

The protein belongs to the major facilitator superfamily.

It localises to the membrane. In Danio rerio (Zebrafish), this protein is Solute carrier family 49 member A3 (slc49a3).